The chain runs to 193 residues: Dual-action ribosomal maturation protein DarP (193 aa).

A compositionally biased stretch (basic and acidic residues) spans 1–10 (MRGRDEDTGE). Disordered stretches follow at residues 1 to 20 (MRGR…SQQR) and 171 to 193 (QEQG…EDDE). The segment covering 181 to 193 (GLEDGESALEDDE) has biased composition (acidic residues).

This sequence belongs to the DarP family.

Its subcellular location is the cytoplasm. Functionally, member of a network of 50S ribosomal subunit biogenesis factors which assembles along the 30S-50S interface, preventing incorrect 23S rRNA structures from forming. Promotes peptidyl transferase center (PTC) maturation. This chain is Dual-action ribosomal maturation protein DarP, found in Xanthomonas oryzae pv. oryzae (strain KACC10331 / KXO85).